Here is a 61-residue protein sequence, read N- to C-terminus: Small ribosomal subunit protein uS14B (61 aa).

Residues cysteine 24, cysteine 27, cysteine 40, and cysteine 43 each coordinate Zn(2+).

This sequence belongs to the universal ribosomal protein uS14 family. Zinc-binding uS14 subfamily. As to quaternary structure, part of the 30S ribosomal subunit. Contacts proteins S3 and S10. Zn(2+) serves as cofactor.

Its function is as follows. Binds 16S rRNA, required for the assembly of 30S particles and may also be responsible for determining the conformation of the 16S rRNA at the A site. The sequence is that of Small ribosomal subunit protein uS14B from Rhodococcus jostii (strain RHA1).